The chain runs to 282 residues: NADPH-dependent 7-cyano-7-deazaguanine reductase (282 aa).

Ile-88–Ser-90 is a substrate binding site. Ser-90–Lys-91 provides a ligand contact to NADPH. Catalysis depends on Cys-190, which acts as the Thioimide intermediate. Asp-197 acts as the Proton donor in catalysis. His-229–Glu-230 is a binding site for substrate. Arg-258–Gly-259 is a binding site for NADPH.

The protein belongs to the GTP cyclohydrolase I family. QueF type 2 subfamily. In terms of assembly, homodimer.

Its subcellular location is the cytoplasm. It carries out the reaction 7-aminomethyl-7-carbaguanine + 2 NADP(+) = 7-cyano-7-deazaguanine + 2 NADPH + 3 H(+). Its pathway is tRNA modification; tRNA-queuosine biosynthesis. Catalyzes the NADPH-dependent reduction of 7-cyano-7-deazaguanine (preQ0) to 7-aminomethyl-7-deazaguanine (preQ1). In Salmonella heidelberg (strain SL476), this protein is NADPH-dependent 7-cyano-7-deazaguanine reductase.